The primary structure comprises 467 residues: Zinc finger and BTB domain-containing protein 43 (467 aa).

Met-1 is subject to N-acetylmethionine. A BTB domain is found at 33 to 97; sequence CDVSIVVQGH…SYTGRLVMPA (65 aa). Disordered stretches follow at residues 134–153 and 162–227; these read LNHGSDHQSPSSSNYNGLVE and HTDF…EFHY. Polar residues predominate over residues 140–149; the sequence is HQSPSSSNYN. 2 stretches are compositionally biased toward basic and acidic residues: residues 164-174 and 182-194; these read DFPKAQELRDG and KDELSSQVTEHEY. Residues Lys-182, Lys-247, Lys-297, and Lys-358 each participate in a glycyl lysine isopeptide (Lys-Gly) (interchain with G-Cter in SUMO2) cross-link. The C2H2-type 1; atypical zinc finger occupies 373-394; it reads YPCQCGKSFTHKSQRDRHMSMH. Residues 400–422 form a C2H2-type 2 zinc finger; the sequence is YGCSVCGKKFKMKHHLVGHMKIH. The residue at position 423 (Thr-423) is a Phosphothreonine. The segment at 428–450 adopts a C2H2-type 3; atypical zinc-finger fold; it reads YECNICAKRFMWRDSFHRHVTSC. Lys-458 participates in a covalent cross-link: Glycyl lysine isopeptide (Lys-Gly) (interchain with G-Cter in SUMO2).

The protein belongs to the krueppel C2H2-type zinc-finger protein family. In terms of assembly, interacts with BDP1.

The protein localises to the nucleus. Functionally, may be involved in transcriptional regulation. This is Zinc finger and BTB domain-containing protein 43 (Zbtb43) from Mus musculus (Mouse).